We begin with the raw amino-acid sequence, 182 residues long: Adenine phosphoribosyltransferase (182 aa).

Belongs to the purine/pyrimidine phosphoribosyltransferase family. In terms of assembly, homodimer.

It is found in the cytoplasm. The enzyme catalyses AMP + diphosphate = 5-phospho-alpha-D-ribose 1-diphosphate + adenine. It participates in purine metabolism; AMP biosynthesis via salvage pathway; AMP from adenine: step 1/1. In terms of biological role, catalyzes a salvage reaction resulting in the formation of AMP, that is energically less costly than de novo synthesis. This Pseudomonas entomophila (strain L48) protein is Adenine phosphoribosyltransferase.